Here is a 546-residue protein sequence, read N- to C-terminus: Putative serine/threonine-protein kinase L268 (546 aa).

A Cyclin N-terminal domain is found at 1–112; the sequence is MVCFSKYSGI…ILQTLDFHLV (112 aa). One can recognise a Protein kinase domain in the interval 260–544; it reads ITVVKNLGEG…QTLEEFNKFN (285 aa). Residues 266-274 and lysine 287 each bind ATP; that span reads LGEGTYGTV. The active-site Proton acceptor is aspartate 389.

Belongs to the protein kinase superfamily. Ser/Thr protein kinase family.

It catalyses the reaction L-seryl-[protein] + ATP = O-phospho-L-seryl-[protein] + ADP + H(+). It carries out the reaction L-threonyl-[protein] + ATP = O-phospho-L-threonyl-[protein] + ADP + H(+). In Acanthamoeba polyphaga mimivirus (APMV), this protein is Putative serine/threonine-protein kinase L268.